We begin with the raw amino-acid sequence, 497 residues long: FAD-linked oxidoreductase fmqD (497 aa).

The first 17 residues, 1–17 (MQYIPFLISGLVPVALS), serve as a signal peptide directing secretion. Positions 68-243 (NDPSYVATVK…TSATYRIYDQ (176 aa)) constitute an FAD-binding PCMH-type domain. Asn99, Asn261, and Asn288 each carry an N-linked (GlcNAc...) asparagine glycan.

The protein belongs to the oxygen-dependent FAD-linked oxidoreductase family.

The protein localises to the secreted. It is found in the cell wall. It participates in alkaloid biosynthesis. In terms of biological role, FAD-linked oxidoreductase; part of the gene cluster that mediates the biosynthesis of the antitumor fumiquinazolines that confer a dual-usage capability to defend against phagocytes in the environment and animal hosts. The simplest member is fumiquinazoline F (FQF) with a 6-6-6 tricyclic core derived from anthranilic acid (Ant), tryptophan (Trp), and alanine (Ala). The trimodular NRPS fmqA is responsible for FQF formation. Modules 1, 2 and 3 of fmqA are predicted to activate and load Ant, Trp and Ala, respectively, providing for the assembly of an Ant-Trp-Ala-S-enzyme intermediate that would undergo double cyclization for chain release and generation of the tricyclic 6-6-6 product fumiquinazoline F. The presence of an E domain predicted for module 2 of fmqA is consistent with epimerization of L-Trp to D-Trp during assembly to generate the R-stereocenter at C14 of FQF. The FAD-dependent monooxygenase fmqB and the monomodular NRPS fmqC then maturate FQF to FQA. FmqB oxidizes the 2',3'-double bond of the indole side chain of FQF, and fmqC activates L-Ala as the adenylate, installs it as the pantetheinyl thioester on its carrier protein domain, and acylates the oxidized indole for subsequent intramolecular cyclization to create the 6-5-5-imidazolindolone of FQA. The FAD-linked oxidoreductase fmqD introduces a third layer of scaffold complexity by converting FQA to the spirohemiaminal FQC, presumably by catalyzing the formation of a transient imine within the pyrazinone ring. FQC subsequently converts nonenzymatically to the known cyclic aminal FQD. The sequence is that of FAD-linked oxidoreductase fmqD from Aspergillus fumigatus (strain ATCC MYA-4609 / CBS 101355 / FGSC A1100 / Af293) (Neosartorya fumigata).